The following is a 1237-amino-acid chain: Clustered mitochondria protein homolog (1237 aa).

The Clu domain maps to 291 to 535; that stretch reads DITRSQENCL…RITPLDVAWS (245 aa). Basic and acidic residues-rich tracts occupy residues 575-597 and 845-854; these read RKTA…DKAE and SQIKSQEHSP. Disordered regions lie at residues 575 to 614 and 845 to 886; these read RKTA…AVAS and SQIK…VAAS. TPR repeat units lie at residues 957 to 990, 999 to 1032, and 1041 to 1074; these read AKLY…TERT, ILSY…WKII, and ITTM…CEGL. 2 disordered regions span residues 1152–1189 and 1201–1237; these read RLRR…KSIG and FIEG…VQTA. Polar residues predominate over residues 1156-1187; that stretch reads TNLSPRMTIGTKPQPQVGQNAPATTNGATSKS.

The protein belongs to the CLU family. In terms of assembly, may associate with the eukaryotic translation initiation factor 3 (eIF-3) complex.

Its subcellular location is the cytoplasm. MRNA-binding protein involved in proper cytoplasmic distribution of mitochondria. This is Clustered mitochondria protein homolog from Ajellomyces capsulatus (strain NAm1 / WU24) (Darling's disease fungus).